The chain runs to 74 residues: Large ribosomal subunit protein bL31 (74 aa).

Cys-16, Cys-18, Cys-38, and Cys-41 together coordinate Zn(2+).

This sequence belongs to the bacterial ribosomal protein bL31 family. Type A subfamily. In terms of assembly, part of the 50S ribosomal subunit. Requires Zn(2+) as cofactor.

Functionally, binds the 23S rRNA. This is Large ribosomal subunit protein bL31 from Mycolicibacterium vanbaalenii (strain DSM 7251 / JCM 13017 / BCRC 16820 / KCTC 9966 / NRRL B-24157 / PYR-1) (Mycobacterium vanbaalenii).